The chain runs to 364 residues: Protein RecA (364 aa).

77–84 serves as a coordination point for ATP; it reads GPESSGKT. Residues 343–364 form a disordered region; the sequence is DRFLQNGGPDPDDGDGDATAEM. The span at 352–364 shows a compositional bias: acidic residues; that stretch reads DPDDGDGDATAEM.

This sequence belongs to the RecA family.

The protein localises to the cytoplasm. Functionally, can catalyze the hydrolysis of ATP in the presence of single-stranded DNA, the ATP-dependent uptake of single-stranded DNA by duplex DNA, and the ATP-dependent hybridization of homologous single-stranded DNAs. It interacts with LexA causing its activation and leading to its autocatalytic cleavage. The sequence is that of Protein RecA from Rhizobium johnstonii (strain DSM 114642 / LMG 32736 / 3841) (Rhizobium leguminosarum bv. viciae).